The sequence spans 328 residues: Gonadotropin-releasing hormone receptor (328 aa).

The Extracellular portion of the chain corresponds to 1–38; the sequence is MANSDSPEQNENHCSSINSSIPLTPGSLPTLTLSGKIR. The N-linked (GlcNAc...) asparagine glycan is linked to asparagine 18. Residues 39 to 58 traverse the membrane as a helical segment; the sequence is VTVTFFLFLLSTIFNTSFLL. The Cytoplasmic portion of the chain corresponds to 59–77; it reads KLQNWTQRKEKRKKLSRMK. A helical membrane pass occupies residues 78 to 97; the sequence is LLLKHLTLANLLETLIVMPL. Residues 98-115 are Extracellular-facing; sequence DGMWNITVQWYAGELLCK. Asparagine 102 carries N-linked (GlcNAc...) asparagine glycosylation. A disulfide bridge links cysteine 114 with cysteine 196. A helical membrane pass occupies residues 116-137; it reads VLSYLKLFSMYAPAFMMVVISL. Topologically, residues 138–164 are cytoplasmic; sequence DRSLAITKPLAVKSNSKLGQFMIGLAW. A helical transmembrane segment spans residues 165-184; that stretch reads LLSSIFAGPQLYIFGMIHLA. Residues 185–212 are Extracellular-facing; it reads DDSGQTEGFSQCVTHCSFPQWWHQAFYN. The helical transmembrane segment at 213-232 threads the bilayer; the sequence is FFTFSCLFIIPLLIMVICNA. The Cytoplasmic segment spans residues 233–281; the sequence is KIIFTLTRVLHQDPHKLQLNQSKNNIPRARLRTLKMTVAFATSFTVCWT. The chain crosses the membrane as a helical span at residues 282–300; it reads PYYVLGIWYWFDPDMVNRV. Residues 301-306 lie on the Extracellular side of the membrane; sequence SDPVNH. A helical transmembrane segment spans residues 307–326; that stretch reads FFFLFAFLNPCFNPLIYGYF. Residues 327–328 lie on the Cytoplasmic side of the membrane; that stretch reads SL.

It belongs to the G-protein coupled receptor 1 family.

Its subcellular location is the cell membrane. Receptor for gonadotropin releasing hormone (GnRH) that mediates the action of GnRH to stimulate the secretion of the gonadotropic hormones luteinizing hormone (LH) and follicle-stimulating hormone (FSH). This receptor mediates its action by association with G-proteins that activate a phosphatidylinositol-calcium second messenger system. The protein is Gonadotropin-releasing hormone receptor (GNRHR) of Bos mutus grunniens (Wild yak).